Consider the following 506-residue polypeptide: DEAD-box ATP-dependent RNA helicase CshA (506 aa).

A Q motif motif is present at residues 2–30; it reads QNFKELGISDNTVQSLESMGFKEPTPIQK. The 171-residue stretch at 33-203 folds into the Helicase ATP-binding domain; that stretch reads IPYALQGIDI…QQFMKSPKII (171 aa). 46 to 53 provides a ligand contact to ATP; that stretch reads AQTGTGKT. The short motif at 150–153 is the DEAD box element; it reads DEAD. Residues 214 to 375 form the Helicase C-terminal domain; sequence QIEEFYTIVK…LRPPHRKEVL (162 aa). Residues 436 to 506 are disordered; sequence EKPLSRKGRN…KGRTFADHQK (71 aa). Basic residues predominate over residues 468-480; that stretch reads KRSKGYSSKKKST.

It belongs to the DEAD box helicase family. CshA subfamily. Oligomerizes, may be a member of the RNA degradosome.

It is found in the cytoplasm. The catalysed reaction is ATP + H2O = ADP + phosphate + H(+). Functionally, DEAD-box RNA helicase possibly involved in RNA degradation. Unwinds dsRNA in both 5'- and 3'-directions, has RNA-dependent ATPase activity. This is DEAD-box ATP-dependent RNA helicase CshA from Staphylococcus aureus (strain MRSA252).